The sequence spans 96 residues: Co-chaperonin GroES (96 aa).

Belongs to the GroES chaperonin family. As to quaternary structure, heptamer of 7 subunits arranged in a ring. Interacts with the chaperonin GroEL.

The protein localises to the cytoplasm. Together with the chaperonin GroEL, plays an essential role in assisting protein folding. The GroEL-GroES system forms a nano-cage that allows encapsulation of the non-native substrate proteins and provides a physical environment optimized to promote and accelerate protein folding. GroES binds to the apical surface of the GroEL ring, thereby capping the opening of the GroEL channel. The sequence is that of Co-chaperonin GroES from Vibrio atlanticus (strain LGP32) (Vibrio splendidus (strain Mel32)).